The primary structure comprises 124 residues: Mini zinc finger protein 4 (124 aa).

A ZF-HD dimerization-type; degenerate zinc finger spans residues 35 to 84 (YGECRRNHAARMGGHAVDGCREFLAEGEEGTGGALRCAACGCHRSFHRRV).

Homo- and heterodimers.

The protein localises to the cytoplasm. Its function is as follows. Inhibits zinc finger homeodomain (ZHD) transcription factors, by interacting with them to prevent both their nuclear localization and their DNA-binding properties. The chain is Mini zinc finger protein 4 (MIF4) from Oryza sativa subsp. japonica (Rice).